The primary structure comprises 85 residues: MDISRAEQRILHLLAQGGRIEIIRSETKKIEAASCFTRDGWLYPGFDLTLFRKLKHLKAIKSSGGHPYRITERGLRLVRAQLDNR.

It belongs to the UPF0386 family.

The protein is UPF0386 protein Arad_1912 of Rhizobium rhizogenes (strain K84 / ATCC BAA-868) (Agrobacterium radiobacter).